The chain runs to 130 residues: Fluoride-specific ion channel FluC (130 aa).

Transmembrane regions (helical) follow at residues Leu3 to Gly23, Leu38 to Ala58, Phe67 to Leu87, and Ile102 to Leu122. Na(+) contacts are provided by Gly77 and Thr80.

The protein belongs to the fluoride channel Fluc/FEX (TC 1.A.43) family.

The protein localises to the cell inner membrane. The enzyme catalyses fluoride(in) = fluoride(out). Its activity is regulated as follows. Na(+) is not transported, but it plays an essential structural role and its presence is essential for fluoride channel function. In terms of biological role, fluoride-specific ion channel. Important for reducing fluoride concentration in the cell, thus reducing its toxicity. This Helicobacter pylori (strain J99 / ATCC 700824) (Campylobacter pylori J99) protein is Fluoride-specific ion channel FluC.